We begin with the raw amino-acid sequence, 362 residues long: Putative RING-H2 finger protein ATL21B (362 aa).

The N-terminal stretch at 1–23 (MIISKQLFLLFFLLFFIFPLRHA) is a signal peptide. Residues 234 to 254 (VVAVLICLSIIGAVILFVTCI) traverse the membrane as a helical segment. The RING-type; atypical zinc-finger motif lies at 316 to 358 (CPICLSEYVSKETVRFIPECDHCFHAKCIDVWLKIHGSCPLCR).

This sequence belongs to the RING-type zinc finger family. ATL subfamily.

Its subcellular location is the membrane. It catalyses the reaction S-ubiquitinyl-[E2 ubiquitin-conjugating enzyme]-L-cysteine + [acceptor protein]-L-lysine = [E2 ubiquitin-conjugating enzyme]-L-cysteine + N(6)-ubiquitinyl-[acceptor protein]-L-lysine.. Its pathway is protein modification; protein ubiquitination. This chain is Putative RING-H2 finger protein ATL21B (ATL21B), found in Arabidopsis thaliana (Mouse-ear cress).